A 308-amino-acid polypeptide reads, in one-letter code: MFDPETLRTFIAVAETGSFSKAAERLCKTTATISYRIKLLEENTGVALFFRTTRSVTLTAAGEHLLCQARDWLSWLESMPSELQQVNDGVERQVNIVINNLLYNPQAVARLLAWLNERYPFTQFHISRQIYMGVWDSLLYEGFSLAIGVTGTEALANTFSLDPLGSVQWRFVMAADHPLANVEEPLTEAQLRRFPAVNIEDSARTLTKRVAWRLPGQKEIIVPDMETKIAAHLAGVGIGFLPKSLCQSMLDNQQLVSRVIPTMRPPSPLSLAWRKFGSGKAVEDIVTLFTQRRPEISGFLEIFGNPRS.

Residues 2-59 (FDPETLRTFIAVAETGSFSKAAERLCKTTATISYRIKLLEENTGVALFFRTTRSVTLT) enclose the HTH lysR-type domain. Positions 19–38 (FSKAAERLCKTTATISYRIK) form a DNA-binding region, H-T-H motif.

The protein belongs to the LysR transcriptional regulatory family.

Positive regulator essential for the expression of allD operon. Binds to the allD promoter. The polypeptide is HTH-type transcriptional activator AllS (allS) (Escherichia coli O6:K15:H31 (strain 536 / UPEC)).